Reading from the N-terminus, the 182-residue chain is UPF0397 protein YdcD (182 aa).

A run of 5 helical transmembrane segments spans residues isoleucine 8–isoleucine 28, alanine 42–isoleucine 62, alanine 74–valine 94, isoleucine 114–leucine 134, and glutamine 146–leucine 166.

Belongs to the UPF0397 family.

The protein localises to the cell membrane. This is UPF0397 protein YdcD (ydcD) from Lactococcus lactis subsp. lactis (strain IL1403) (Streptococcus lactis).